Here is a 331-residue protein sequence, read N- to C-terminus: Protoheme IX farnesyltransferase (331 aa).

The next 8 membrane-spanning stretches (helical) occupy residues Leu-63 to Leu-83, Ser-109 to Val-129, Leu-132 to Leu-152, Ile-160 to Gly-180, Trp-188 to Leu-208, Val-215 to Val-235, Val-241 to Leu-261, and Ile-294 to Val-314.

The protein belongs to the UbiA prenyltransferase family. Protoheme IX farnesyltransferase subfamily.

Its subcellular location is the cell inner membrane. The catalysed reaction is heme b + (2E,6E)-farnesyl diphosphate + H2O = Fe(II)-heme o + diphosphate. It participates in porphyrin-containing compound metabolism; heme O biosynthesis; heme O from protoheme: step 1/1. Converts heme B (protoheme IX) to heme O by substitution of the vinyl group on carbon 2 of heme B porphyrin ring with a hydroxyethyl farnesyl side group. This is Protoheme IX farnesyltransferase from Prochlorococcus marinus (strain NATL2A).